The chain runs to 151 residues: Ribosomal RNA large subunit methyltransferase H (151 aa).

S-adenosyl-L-methionine-binding positions include Gly-100 and 119-124; that span reads LSKMTF.

This sequence belongs to the RNA methyltransferase RlmH family. In terms of assembly, homodimer.

The protein localises to the cytoplasm. The catalysed reaction is pseudouridine(1915) in 23S rRNA + S-adenosyl-L-methionine = N(3)-methylpseudouridine(1915) in 23S rRNA + S-adenosyl-L-homocysteine + H(+). Specifically methylates the pseudouridine at position 1915 (m3Psi1915) in 23S rRNA. The polypeptide is Ribosomal RNA large subunit methyltransferase H (Thermotoga sp. (strain RQ2)).